Here is a 175-residue protein sequence, read N- to C-terminus: ATP synthase subunit delta (175 aa).

It belongs to the ATPase delta chain family. As to quaternary structure, F-type ATPases have 2 components, F(1) - the catalytic core - and F(0) - the membrane proton channel. F(1) has five subunits: alpha(3), beta(3), gamma(1), delta(1), epsilon(1). F(0) has three main subunits: a(1), b(2) and c(10-14). The alpha and beta chains form an alternating ring which encloses part of the gamma chain. F(1) is attached to F(0) by a central stalk formed by the gamma and epsilon chains, while a peripheral stalk is formed by the delta and b chains.

The protein resides in the cell inner membrane. In terms of biological role, f(1)F(0) ATP synthase produces ATP from ADP in the presence of a proton or sodium gradient. F-type ATPases consist of two structural domains, F(1) containing the extramembraneous catalytic core and F(0) containing the membrane proton channel, linked together by a central stalk and a peripheral stalk. During catalysis, ATP synthesis in the catalytic domain of F(1) is coupled via a rotary mechanism of the central stalk subunits to proton translocation. Its function is as follows. This protein is part of the stalk that links CF(0) to CF(1). It either transmits conformational changes from CF(0) to CF(1) or is implicated in proton conduction. The protein is ATP synthase subunit delta of Xanthomonas oryzae pv. oryzae (strain PXO99A).